Reading from the N-terminus, the 109-residue chain is uncharacterized protein (109 aa).

The protein resides in the mitochondrion. This is an uncharacterized protein from Arabidopsis thaliana (Mouse-ear cress).